The following is a 122-amino-acid chain: MIQQESRLDVADNTGAREVMCIKVLGGSRRRFATVGDVIVCSVKSVIPGSEVKKKAVVRAVIVRVKQPTRRPDGSYIRFDSNAVVLVDKDRNPRGTRIFGAVARELRENNFMKIVSLANEVV.

This sequence belongs to the universal ribosomal protein uL14 family. Part of the 50S ribosomal subunit. Forms a cluster with proteins L3 and L19. In the 70S ribosome, L14 and L19 interact and together make contacts with the 16S rRNA in bridges B5 and B8.

Its function is as follows. Binds to 23S rRNA. Forms part of two intersubunit bridges in the 70S ribosome. The sequence is that of Large ribosomal subunit protein uL14 from Rhodopirellula baltica (strain DSM 10527 / NCIMB 13988 / SH1).